Consider the following 105-residue polypeptide: MTLLHDLEQTILSRKGTDPDTSWTAKLLSKGPEKCAEKFGEEAIEAIIEAVKDDKAKLASEGADVLYHFLVMLAARDVALDDVLTVLAERQGLSGLAEKAARPKG.

It belongs to the PRA-PH family.

The protein localises to the cytoplasm. The catalysed reaction is 1-(5-phospho-beta-D-ribosyl)-ATP + H2O = 1-(5-phospho-beta-D-ribosyl)-5'-AMP + diphosphate + H(+). It functions in the pathway amino-acid biosynthesis; L-histidine biosynthesis; L-histidine from 5-phospho-alpha-D-ribose 1-diphosphate: step 2/9. The chain is Phosphoribosyl-ATP pyrophosphatase from Ruegeria sp. (strain TM1040) (Silicibacter sp.).